Reading from the N-terminus, the 141-residue chain is Large ribosomal subunit protein uL13 (141 aa).

It belongs to the universal ribosomal protein uL13 family. In terms of assembly, part of the 50S ribosomal subunit.

Functionally, this protein is one of the early assembly proteins of the 50S ribosomal subunit, although it is not seen to bind rRNA by itself. It is important during the early stages of 50S assembly. The sequence is that of Large ribosomal subunit protein uL13 from Helicobacter pylori (strain P12).